A 362-amino-acid chain; its full sequence is UDP-N-acetylglucosamine--N-acetylmuramyl-(pentapeptide) pyrophosphoryl-undecaprenol N-acetylglucosamine transferase (362 aa).

Residues 15-17, asparagine 127, arginine 165, serine 191, isoleucine 247, 266-271, and glutamine 292 each bind UDP-N-acetyl-alpha-D-glucosamine; these read TGG and ALTVSE.

The protein belongs to the glycosyltransferase 28 family. MurG subfamily.

The protein resides in the cell inner membrane. It carries out the reaction di-trans,octa-cis-undecaprenyl diphospho-N-acetyl-alpha-D-muramoyl-L-alanyl-D-glutamyl-meso-2,6-diaminopimeloyl-D-alanyl-D-alanine + UDP-N-acetyl-alpha-D-glucosamine = di-trans,octa-cis-undecaprenyl diphospho-[N-acetyl-alpha-D-glucosaminyl-(1-&gt;4)]-N-acetyl-alpha-D-muramoyl-L-alanyl-D-glutamyl-meso-2,6-diaminopimeloyl-D-alanyl-D-alanine + UDP + H(+). It participates in cell wall biogenesis; peptidoglycan biosynthesis. Functionally, cell wall formation. Catalyzes the transfer of a GlcNAc subunit on undecaprenyl-pyrophosphoryl-MurNAc-pentapeptide (lipid intermediate I) to form undecaprenyl-pyrophosphoryl-MurNAc-(pentapeptide)GlcNAc (lipid intermediate II). This Shewanella sp. (strain MR-4) protein is UDP-N-acetylglucosamine--N-acetylmuramyl-(pentapeptide) pyrophosphoryl-undecaprenol N-acetylglucosamine transferase.